A 167-amino-acid polypeptide reads, in one-letter code: Leukotoxin-activating lysine-acyltransferase LktC serotype A1 (167 aa).

Catalysis depends on residues histidine 22 and aspartate 91.

The protein belongs to the RTX toxin acyltransferase family.

It localises to the cytoplasm. It carries out the reaction a fatty acyl-[ACP] + L-lysyl-[protein] = N(6)-(fatty acyl)-L-lysyl-[protein] + holo-[ACP] + H(+). In terms of biological role, involved in fatty acylation of the protoxin (LktA) at two internal lysine residues, thereby converting it to the active toxin. This chain is Leukotoxin-activating lysine-acyltransferase LktC serotype A1 (lktC), found in Mannheimia haemolytica (Pasteurella haemolytica).